We begin with the raw amino-acid sequence, 467 residues long: Glutamate--tRNA ligase (467 aa).

The short motif at 14 to 24 (PSPTGFLHLGG) is the 'HIGH' region element. Residues 124–134 (PRYDGTWRPEP) show a composition bias toward basic and acidic residues. The disordered stretch occupies residues 124–156 (PRYDGTWRPEPGKTLPPVPAGRKPVVRFKNPQD). Residues 246–250 (KLSKR) carry the 'KMSKS' region motif. Lys249 is a binding site for ATP.

It belongs to the class-I aminoacyl-tRNA synthetase family. Glutamate--tRNA ligase type 1 subfamily. Monomer.

The protein localises to the cytoplasm. It catalyses the reaction tRNA(Glu) + L-glutamate + ATP = L-glutamyl-tRNA(Glu) + AMP + diphosphate. Catalyzes the attachment of glutamate to tRNA(Glu) in a two-step reaction: glutamate is first activated by ATP to form Glu-AMP and then transferred to the acceptor end of tRNA(Glu). The polypeptide is Glutamate--tRNA ligase (Bordetella petrii (strain ATCC BAA-461 / DSM 12804 / CCUG 43448)).